Reading from the N-terminus, the 97-residue chain is Mitochondrial import inner membrane translocase subunit Tim8 A (97 aa).

A Twin CX3C motif motif is present at residues 43-66 (CWEKCMDKPGPKLDSRAEACFVNC). 2 cysteine pairs are disulfide-bonded: C43–C66 and C47–C62. S57, S87, S94, and S96 each carry phosphoserine.

It belongs to the small Tim family. Heterohexamer; composed of 3 copies of TIMM8A and 3 copies of TIMM13, named soluble 70 kDa complex. Associates with the TIM22 complex, whose core is composed of TIMM22. Present at high level in liver and brain, and at lower level in muscle and heart. In CNS sections, it is predominantly present in the soma and the dendritic portion of the Purkinje cells of the cerebellum, but not in the glial cells. Scattered expression also is also detected in the brain stem, olfactory bulb, substantia nigra, hippocampus and striatum (at protein level). Ubiquitously expressed.

The protein resides in the mitochondrion inner membrane. Mitochondrial intermembrane chaperone that participates in the import and insertion of some multi-pass transmembrane proteins into the mitochondrial inner membrane. Also required for the transfer of beta-barrel precursors from the TOM complex to the sorting and assembly machinery (SAM complex) of the outer membrane. Acts as a chaperone-like protein that protects the hydrophobic precursors from aggregation and guide them through the mitochondrial intermembrane space. The TIMM8-TIMM13 complex mediates the import of proteins such as TIMM23, SLC25A12/ARALAR1 and SLC25A13/ARALAR2, while the predominant TIMM9-TIMM10 70 kDa complex mediates the import of much more proteins. This is Mitochondrial import inner membrane translocase subunit Tim8 A (Timm8a1) from Mus musculus (Mouse).